A 413-amino-acid chain; its full sequence is Gamma-DL-glutamyl hydrolase (413 aa).

An N-terminal signal peptide occupies residues 1-32; the sequence is MNTLANWKKFLLVAVIICFLVPIMTKAEIAEA. NlpC/P60 domains are found at residues 33-159, 163-287, and 291-413; these read DTSS…RRIA, ATAD…RRFD, and IPKE…IRVQ. The Nucleophile role is filled by Cys-194. His-247 (proton acceptor) is an active-site residue. Gln-259 is a catalytic residue.

This sequence belongs to the peptidase C40 family.

It is found in the secreted. The protein resides in the cell wall. With respect to regulation, inhibited by pretreatment with 1 mM 4-(hydroxymercuri)benzoate, a sulfhydryl inhibitor. Its function is as follows. Cleaves, in an endo-type manner, the gamma-glutamyl bond between D-glutamate and L-glutamate of poly-gamma-glutamate (PGA). The chain is Gamma-DL-glutamyl hydrolase (pgdS) from Bacillus subtilis (strain 168).